Here is a 142-residue protein sequence, read N- to C-terminus: Nucleoside diphosphate kinase (142 aa).

Positions 11, 59, 87, 93, 104, and 114 each coordinate ATP. H117 serves as the catalytic Pros-phosphohistidine intermediate.

Belongs to the NDK family. In terms of assembly, homotetramer. Mg(2+) serves as cofactor.

Its subcellular location is the cytoplasm. The catalysed reaction is a 2'-deoxyribonucleoside 5'-diphosphate + ATP = a 2'-deoxyribonucleoside 5'-triphosphate + ADP. The enzyme catalyses a ribonucleoside 5'-diphosphate + ATP = a ribonucleoside 5'-triphosphate + ADP. Major role in the synthesis of nucleoside triphosphates other than ATP. The ATP gamma phosphate is transferred to the NDP beta phosphate via a ping-pong mechanism, using a phosphorylated active-site intermediate. This Yersinia pseudotuberculosis serotype O:1b (strain IP 31758) protein is Nucleoside diphosphate kinase.